A 1430-amino-acid polypeptide reads, in one-letter code: Nephrocystin-4 (1430 aa).

The interval 824-1430 (MRMGNVGRPP…ETFCVKVRYE (607 aa)) is sufficient for basal bodies localization. The disordered stretch occupies residues 828–857 (NVGRPPEKKLKRRETLPPSNSRIITMHDGR).

It belongs to the NPHP4 family.

The protein resides in the cytoplasm. Its subcellular location is the cytoskeleton. It localises to the cilium basal body. In terms of biological role, involved in the organization of apical junctions. Required for building functional cilia. Involved in the organization of the subapical actin network in multiciliated epithelial cells. Seems to recruit int to basal bodies of motile cilia which subsequently interacts with actin-modifying proteins such as daam1. May down-regulate the canonical Wnt pathway and promote the Wnt-PCP pathway. Acts as a negative regulator of the hippo pathway. This chain is Nephrocystin-4 (nphp4), found in Xenopus laevis (African clawed frog).